The following is a 352-amino-acid chain: Spermidine/putrescine import ATP-binding protein PotA (352 aa).

Positions 7-237 (IRLENVTKSF…PVNAFVADFI (231 aa)) constitute an ABC transporter domain. 39–46 (GPSGCGKT) lines the ATP pocket.

Belongs to the ABC transporter superfamily. Spermidine/putrescine importer (TC 3.A.1.11.1) family. The complex is composed of two ATP-binding proteins (PotA), two transmembrane proteins (PotB and PotC) and a solute-binding protein (PotD).

It localises to the cell membrane. It carries out the reaction ATP + H2O + polyamine-[polyamine-binding protein]Side 1 = ADP + phosphate + polyamineSide 2 + [polyamine-binding protein]Side 1.. Part of the ABC transporter complex PotABCD involved in spermidine/putrescine import. Responsible for energy coupling to the transport system. The sequence is that of Spermidine/putrescine import ATP-binding protein PotA from Acetivibrio thermocellus (strain ATCC 27405 / DSM 1237 / JCM 9322 / NBRC 103400 / NCIMB 10682 / NRRL B-4536 / VPI 7372) (Clostridium thermocellum).